The following is an 851-amino-acid chain: Glutathione transporter 1 (851 aa).

Residues 1–14 are compositionally biased toward polar residues; it reads MTARNSASIPTSIR. Residues 1–116 form a disordered region; it reads MTARNSASIP…LDNETDSEVE (116 aa). Residue Asn32 is glycosylated (N-linked (GlcNAc...) asparagine). The segment covering 33–68 has biased composition (low complexity); that stretch reads LSTKTASKTSLTFRQSSSDESTSSYSGNHHNINIQH. The span at 74–92 shows a compositional bias: polar residues; sequence FRTNSSSFSPNDYSISESP. A glycan (N-linked (GlcNAc...) asparagine) is linked at Asn77. Position 93 is a phosphoserine (Ser93). Residues 105–134 are a coiled coil; that stretch reads VQLDNETDSEVESEVEELERELEAIEDSVY. Asn109 carries an N-linked (GlcNAc...) asparagine glycan. 2 helical membrane passes run 156–176 and 179–199; these read TWVL…FFSL and PALS…GKLL. Asn256 carries an N-linked (GlcNAc...) asparagine glycan. The next 4 membrane-spanning stretches (helical) occupy residues 259–279, 282–302, 333–353, and 405–425; these read WGYK…FAGL, RWIV…TVLF, FFAY…FIFK, and WVIC…VPIL. 2 N-linked (GlcNAc...) asparagine glycosylation sites follow: Asn452 and Asn464. The next 5 helical transmembrane spans lie at 480 to 500, 531 to 551, 560 to 580, 592 to 612, and 642 to 662; these read YSMS…HCAL, APQW…IFTV, VWAL…QGVL, IITE…NLMI, and ILFF…VAVQ. The N-linked (GlcNAc...) asparagine glycan is linked to Asn691. A run of 3 helical transmembrane segments spans residues 711-731, 757-777, and 791-811; these read YYPL…TWGL, PATG…NYVI, and VLAA…FLCV. The N-linked (GlcNAc...) asparagine glycan is linked to Asn843.

It belongs to the oligopeptide OPT transporter family.

Its subcellular location is the endoplasmic reticulum membrane. It localises to the cell membrane. Its function is as follows. High-affinity glutathione transporter which plays a role in scavenging glutathione from the extracellular environment for the maintenance of sulfur homeostasis. In Schizosaccharomyces pombe (strain 972 / ATCC 24843) (Fission yeast), this protein is Glutathione transporter 1 (pgt1).